The following is a 1112-amino-acid chain: Carbamoyl phosphate synthase large chain (1112 aa).

The tract at residues M1–E407 is carboxyphosphate synthetic domain. R134, R174, G180, G181, E213, I215, E220, G246, V247, H248, Q290, and E304 together coordinate ATP. The ATP-grasp 1 domain occupies K138–I333. 3 residues coordinate Mg(2+): Q290, E304, and N306. Positions 290, 304, and 306 each coordinate Mn(2+). Positions T408 to V559 are oligomerization domain. Residues A560–Y965 form a carbamoyl phosphate synthetic domain region. The ATP-grasp 2 domain occupies G693 to L884. Residues R729, R768, L770, E775, G800, I801, H802, S803, Q843, and E855 each coordinate ATP. Mg(2+) contacts are provided by Q843, E855, and N857. Residues Q843, E855, and N857 each contribute to the Mn(2+) site. An MGS-like domain is found at G966–N1112. The allosteric domain stretch occupies residues G966–N1112.

It belongs to the CarB family. As to quaternary structure, composed of two chains; the small (or glutamine) chain promotes the hydrolysis of glutamine to ammonia, which is used by the large (or ammonia) chain to synthesize carbamoyl phosphate. Tetramer of heterodimers (alpha,beta)4. Mg(2+) serves as cofactor. Requires Mn(2+) as cofactor.

The catalysed reaction is hydrogencarbonate + L-glutamine + 2 ATP + H2O = carbamoyl phosphate + L-glutamate + 2 ADP + phosphate + 2 H(+). The enzyme catalyses hydrogencarbonate + NH4(+) + 2 ATP = carbamoyl phosphate + 2 ADP + phosphate + 2 H(+). The protein operates within amino-acid biosynthesis; L-arginine biosynthesis; carbamoyl phosphate from bicarbonate: step 1/1. It functions in the pathway pyrimidine metabolism; UMP biosynthesis via de novo pathway; (S)-dihydroorotate from bicarbonate: step 1/3. Functionally, large subunit of the glutamine-dependent carbamoyl phosphate synthetase (CPSase). CPSase catalyzes the formation of carbamoyl phosphate from the ammonia moiety of glutamine, carbonate, and phosphate donated by ATP, constituting the first step of 2 biosynthetic pathways, one leading to arginine and/or urea and the other to pyrimidine nucleotides. The large subunit (synthetase) binds the substrates ammonia (free or transferred from glutamine from the small subunit), hydrogencarbonate and ATP and carries out an ATP-coupled ligase reaction, activating hydrogencarbonate by forming carboxy phosphate which reacts with ammonia to form carbamoyl phosphate. In Mycobacterium sp. (strain JLS), this protein is Carbamoyl phosphate synthase large chain.